Consider the following 276-residue polypeptide: Undecaprenyl-diphosphatase (276 aa).

A run of 7 helical transmembrane segments spans residues 42-62, 88-108, 116-136, 149-169, 187-207, 222-242, and 253-273; these read AVTA…IVYF, ALLG…GYLG, LRSL…IVYA, MRLP…VPGV, VAAT…AGIF, SLVV…AWLL, and FVWY…TGLV.

This sequence belongs to the UppP family.

Its subcellular location is the cell membrane. It carries out the reaction di-trans,octa-cis-undecaprenyl diphosphate + H2O = di-trans,octa-cis-undecaprenyl phosphate + phosphate + H(+). Functionally, catalyzes the dephosphorylation of undecaprenyl diphosphate (UPP). Confers resistance to bacitracin. This Acidothermus cellulolyticus (strain ATCC 43068 / DSM 8971 / 11B) protein is Undecaprenyl-diphosphatase.